Here is a 753-residue protein sequence, read N- to C-terminus: 5-methyltetrahydropteroyltriglutamate--homocysteine methyltransferase (753 aa).

Residues 17 to 20 (RELK) and Lys-117 each bind 5-methyltetrahydropteroyltri-L-glutamate. Residues 431–433 (IGS) and Glu-484 each bind L-homocysteine. L-methionine is bound by residues 431-433 (IGS) and Glu-484. Residues 515-516 (RC) and Trp-561 each bind 5-methyltetrahydropteroyltri-L-glutamate. Asp-599 provides a ligand contact to L-homocysteine. Position 599 (Asp-599) interacts with L-methionine. Residue Glu-605 coordinates 5-methyltetrahydropteroyltri-L-glutamate. Positions 641, 643, and 665 each coordinate Zn(2+). His-694 acts as the Proton donor in catalysis. Cys-726 is a Zn(2+) binding site.

It belongs to the vitamin-B12 independent methionine synthase family. Zn(2+) serves as cofactor.

It catalyses the reaction 5-methyltetrahydropteroyltri-L-glutamate + L-homocysteine = tetrahydropteroyltri-L-glutamate + L-methionine. Its pathway is amino-acid biosynthesis; L-methionine biosynthesis via de novo pathway; L-methionine from L-homocysteine (MetE route): step 1/1. Its function is as follows. Catalyzes the transfer of a methyl group from 5-methyltetrahydrofolate to homocysteine resulting in methionine formation. In Escherichia coli O157:H7, this protein is 5-methyltetrahydropteroyltriglutamate--homocysteine methyltransferase.